A 430-amino-acid polypeptide reads, in one-letter code: UDP-N-acetylglucosamine 1-carboxyvinyltransferase (430 aa).

22–23 lines the phosphoenolpyruvate pocket; sequence KN. Arginine 102 provides a ligand contact to UDP-N-acetyl-alpha-D-glucosamine. The Proton donor role is filled by cysteine 126. Cysteine 126 carries the post-translational modification 2-(S-cysteinyl)pyruvic acid O-phosphothioketal. UDP-N-acetyl-alpha-D-glucosamine is bound by residues 131–135, 172–175, aspartate 317, and isoleucine 339; these read RPVDL and KVSV.

The protein belongs to the EPSP synthase family. MurA subfamily.

The protein localises to the cytoplasm. The enzyme catalyses phosphoenolpyruvate + UDP-N-acetyl-alpha-D-glucosamine = UDP-N-acetyl-3-O-(1-carboxyvinyl)-alpha-D-glucosamine + phosphate. It functions in the pathway cell wall biogenesis; peptidoglycan biosynthesis. Functionally, cell wall formation. Adds enolpyruvyl to UDP-N-acetylglucosamine. This is UDP-N-acetylglucosamine 1-carboxyvinyltransferase from Rhizobium johnstonii (strain DSM 114642 / LMG 32736 / 3841) (Rhizobium leguminosarum bv. viciae).